We begin with the raw amino-acid sequence, 616 residues long: MPKYRSATTTHGRNMAGARALWRATGMTDSDFGKPIITVVNSFTQFVPGHVHLRDLGKLVAEQIEASGGVAKEFNTIAVDDGIAMGHGGMLYSLPSRELIADSVEYMVNAHCADAMVCISNCDKITPGMLMASLRLNIPVIFVSGGPMEAGKTKLSDQIIKLDLVDAMIQGADPKVSDDQSNQVERSACPTCGSCSGMFTANSMNCLIEALGLSQPGNGSLLATHADRKQLFLNAGKRIVELTKRYYEQDDESALPRNIANKAAFENAMTLDIAMGGSTNTVLHLLAAAQEAEIDFTMSDIDKLSRKVPQLCKVAPSTQKYHMEDVHRAGGVLGILGELDRAGLLNRNVKNVLGLTLPQTLEQYDITVTQDEAVKKMFRAGPAGIRTTQAFSQDCRWDSLDDDRAAGCIRSLEYAYSKDGGLAVLYGNFAENGCIVKTAGVDDSILKFTGPVKVYESQDDAVEAILGGKVVEGDVVVIRYEGPKGGPGMQEMLYPTSFLKSMGLGKACALITDGRFSGGTSGLSIGHVSPEAASGGTIALIEDGDTIAIDIPNRSIQLQLSEAEIAARREAQEARGDKAWTPKNRQRQVSFALRAYASLATSADKGAVRDKSKLGG.

D81 is a Mg(2+) binding site. C122 serves as a coordination point for [2Fe-2S] cluster. Residues D123 and K124 each contribute to the Mg(2+) site. At K124 the chain carries N6-carboxylysine. Residue C195 participates in [2Fe-2S] cluster binding. E491 is a binding site for Mg(2+). Catalysis depends on S517, which acts as the Proton acceptor.

The protein belongs to the IlvD/Edd family. In terms of assembly, homodimer. The cofactor is [2Fe-2S] cluster. It depends on Mg(2+) as a cofactor.

The enzyme catalyses (2R)-2,3-dihydroxy-3-methylbutanoate = 3-methyl-2-oxobutanoate + H2O. The catalysed reaction is (2R,3R)-2,3-dihydroxy-3-methylpentanoate = (S)-3-methyl-2-oxopentanoate + H2O. The protein operates within amino-acid biosynthesis; L-isoleucine biosynthesis; L-isoleucine from 2-oxobutanoate: step 3/4. It participates in amino-acid biosynthesis; L-valine biosynthesis; L-valine from pyruvate: step 3/4. Functionally, functions in the biosynthesis of branched-chain amino acids. Catalyzes the dehydration of (2R,3R)-2,3-dihydroxy-3-methylpentanoate (2,3-dihydroxy-3-methylvalerate) into 2-oxo-3-methylpentanoate (2-oxo-3-methylvalerate) and of (2R)-2,3-dihydroxy-3-methylbutanoate (2,3-dihydroxyisovalerate) into 2-oxo-3-methylbutanoate (2-oxoisovalerate), the penultimate precursor to L-isoleucine and L-valine, respectively. The protein is Dihydroxy-acid dehydratase of Salmonella typhi.